The primary structure comprises 436 residues: Ribosomal protein uS12 methylthiotransferase RimO (436 aa).

In terms of domain architecture, MTTase N-terminal spans 2–114 (PNLYLVSLGC…IDEMILKKQN (113 aa)). [4Fe-4S] cluster contacts are provided by cysteine 11, cysteine 45, cysteine 77, cysteine 146, cysteine 150, and cysteine 153. One can recognise a Radical SAM core domain in the interval 132–363 (TGSSYHAYIK…IKKQIEGSFK (232 aa)). The TRAM domain occupies 363-434 (KSLVGEVIKV…KDKLIGEIIC (72 aa)).

This sequence belongs to the methylthiotransferase family. RimO subfamily. The cofactor is [4Fe-4S] cluster.

It localises to the cytoplasm. It catalyses the reaction L-aspartate(89)-[ribosomal protein uS12]-hydrogen + (sulfur carrier)-SH + AH2 + 2 S-adenosyl-L-methionine = 3-methylsulfanyl-L-aspartate(89)-[ribosomal protein uS12]-hydrogen + (sulfur carrier)-H + 5'-deoxyadenosine + L-methionine + A + S-adenosyl-L-homocysteine + 2 H(+). Its function is as follows. Catalyzes the methylthiolation of an aspartic acid residue of ribosomal protein uS12. The polypeptide is Ribosomal protein uS12 methylthiotransferase RimO (Campylobacter fetus subsp. fetus (strain 82-40)).